An 809-amino-acid chain; its full sequence is Valine--tRNA ligase (809 aa).

A 'HIGH' region motif is present at residues 60-70 (PFTSGELHMGH). Positions 546–550 (RMSKS) match the 'KMSKS' region motif. Lysine 549 contacts ATP.

Belongs to the class-I aminoacyl-tRNA synthetase family. ValS type 2 subfamily.

It localises to the cytoplasm. It catalyses the reaction tRNA(Val) + L-valine + ATP = L-valyl-tRNA(Val) + AMP + diphosphate. Catalyzes the attachment of valine to tRNA(Val). As ValRS can inadvertently accommodate and process structurally similar amino acids such as threonine, to avoid such errors, it has a 'posttransfer' editing activity that hydrolyzes mischarged Thr-tRNA(Val) in a tRNA-dependent manner. The polypeptide is Valine--tRNA ligase (Sulfurisphaera tokodaii (strain DSM 16993 / JCM 10545 / NBRC 100140 / 7) (Sulfolobus tokodaii)).